The primary structure comprises 359 residues: Dual-specificity RNA methyltransferase RlmN 1 (359 aa).

Glu96 acts as the Proton acceptor in catalysis. One can recognise a Radical SAM core domain in the interval 102–335 (FKGRATVCIS…STVRQRRGID (234 aa)). An intrachain disulfide couples Cys109 to Cys340. [4Fe-4S] cluster-binding residues include Cys116, Cys120, and Cys123. Residues 166–167 (GE), Ser198, 221–223 (SLH), and Asn297 each bind S-adenosyl-L-methionine. Cys340 (S-methylcysteine intermediate) is an active-site residue.

This sequence belongs to the radical SAM superfamily. RlmN family. Requires [4Fe-4S] cluster as cofactor.

Its subcellular location is the cytoplasm. It carries out the reaction adenosine(2503) in 23S rRNA + 2 reduced [2Fe-2S]-[ferredoxin] + 2 S-adenosyl-L-methionine = 2-methyladenosine(2503) in 23S rRNA + 5'-deoxyadenosine + L-methionine + 2 oxidized [2Fe-2S]-[ferredoxin] + S-adenosyl-L-homocysteine. The catalysed reaction is adenosine(37) in tRNA + 2 reduced [2Fe-2S]-[ferredoxin] + 2 S-adenosyl-L-methionine = 2-methyladenosine(37) in tRNA + 5'-deoxyadenosine + L-methionine + 2 oxidized [2Fe-2S]-[ferredoxin] + S-adenosyl-L-homocysteine. Its function is as follows. Specifically methylates position 2 of adenine 2503 in 23S rRNA and position 2 of adenine 37 in tRNAs. m2A2503 modification seems to play a crucial role in the proofreading step occurring at the peptidyl transferase center and thus would serve to optimize ribosomal fidelity. In Myxococcus xanthus (strain DK1622), this protein is Dual-specificity RNA methyltransferase RlmN 1.